We begin with the raw amino-acid sequence, 252 residues long: tRNA uridine(34) hydroxylase (252 aa).

The region spanning 129 to 223 is the Rhodanese domain; it reads QGRPVVMLDT…YFEETGGKGF (95 aa). Cys183 functions as the Cysteine persulfide intermediate in the catalytic mechanism.

It belongs to the TrhO family.

The catalysed reaction is uridine(34) in tRNA + AH2 + O2 = 5-hydroxyuridine(34) in tRNA + A + H2O. Catalyzes oxygen-dependent 5-hydroxyuridine (ho5U) modification at position 34 in tRNAs. In Bordetella petrii (strain ATCC BAA-461 / DSM 12804 / CCUG 43448), this protein is tRNA uridine(34) hydroxylase.